The primary structure comprises 103 residues: Hexon-interlacing protein (103 aa).

The tract at residues 25–45 is disordered; the sequence is RQNVTGSDLGGKPVPSDVLES. Positions 72–99 form a coiled coil; that stretch reads LDDLKTQVAAMQNSVTAIQEELKDLKQR.

Belongs to the adenoviridae hexon-interlacing protein family. As to quaternary structure, homotrimer. Interacts with hexon protein; this interaction tethers the hexons together. Self-interacts with adjacent proteins. Interacts with kinesin light chain KLC1; this interaction leads to capsid disruption at the nuclear pore complex during virus entry into host cell.

The protein resides in the virion. The protein localises to the host nucleus. Structural component of the virion that acts as a cement protein on the capsid exterior and forms triskelion structures consisting of three molecules that stabilize three hexon trimers at the center of each icosahedral facet and fixes the peripentonal hexons. Dispensable for assembly. During virus entry, recruits the anterograde motor kinesin-1 to the capsid docked at the nuclear pore complex thereby subjecting the docked capsid to a pulling force. The resulting tension leads to capsid disruption, dispersion of capsid fragments toward cell periphery and eventually viral DNA entry into the host nucleus. This chain is Hexon-interlacing protein, found in Canine adenovirus serotype 1 (strain CLL) (CAdV-1).